The following is a 613-amino-acid chain: DNA mismatch repair protein MutL (613 aa).

Residues 364–393 form a disordered region; sequence EPAVARQPEAPRYSSGASAPRPTGANYPHA.

Belongs to the DNA mismatch repair MutL/HexB family.

Its function is as follows. This protein is involved in the repair of mismatches in DNA. It is required for dam-dependent methyl-directed DNA mismatch repair. May act as a 'molecular matchmaker', a protein that promotes the formation of a stable complex between two or more DNA-binding proteins in an ATP-dependent manner without itself being part of a final effector complex. This chain is DNA mismatch repair protein MutL, found in Enterobacter sp. (strain 638).